We begin with the raw amino-acid sequence, 458 residues long: F-box/LRR-repeat protein At5g02910 (458 aa).

Residues 10–56 (MDFISSLPDEILHHILSSVPTKSAIRTSLLSKRWRYVWSETPSLSID) form the F-box domain. LRR repeat units follow at residues 57-84 (CRRA…HLHT), 86-112 (LLNR…SLES), 133-161 (KQLF…LSLS), 162-187 (NCTL…ELLY), 226-251 (CLRL…DLNI), 260-285 (TAGF…TIGG), 325-353 (KLLR…HLND), and 389-414 (ESNL…VVLL).

The polypeptide is F-box/LRR-repeat protein At5g02910 (Arabidopsis thaliana (Mouse-ear cress)).